Reading from the N-terminus, the 847-residue chain is Histidine decarboxylase (847 aa).

The substrate site is built by Phe80 and His193. At Lys304 the chain carries N6-(pyridoxal phosphate)lysine. Residues 575-605 show a composition bias toward polar residues; it reads GNGATRTSTTNSYGHTTSAAQANSERQASIQ. Disordered stretches follow at residues 575 to 662, 769 to 798, and 813 to 847; these read GNGA…RSSP, QSQSLGNNSSTESSSLSGGATPTPTPMSSL, and SQPMLSAHGIGEGQREQGSDSDATVCSTTSSMESL. Acidic residues predominate over residues 606-616; that stretch reads EDNEESPEETE. Low complexity-rich tracts occupy residues 634 to 657 and 769 to 787; these read SLSTPSRSCSSSSHSLIHSLTQSS and QSQSLGNNSSTESSSLSGG. A compositionally biased stretch (polar residues) spans 832 to 847; it reads DSDATVCSTTSSMESL.

It belongs to the group II decarboxylase family. In terms of assembly, homodimer. The cofactor is pyridoxal 5'-phosphate. As to expression, localized primarily to the photoreceptors, in the eye.

The catalysed reaction is L-histidine + H(+) = histamine + CO2. In terms of biological role, required in photoreceptor transmitter synthesis. Catlayzes the conversion of L-histidine to histamine. This Drosophila melanogaster (Fruit fly) protein is Histidine decarboxylase (Hdc).